Reading from the N-terminus, the 252-residue chain is MQVKRWFLNNSLRNYQYLLYDENYAIVIDPLKADIFDEFIKQNTLKLEAILITHRHGDHIAGVKKLLEIYPDALVYAYADNELFKPNIYVADGDFVDFGFTSCKVMYTPGHIDDHVCFLFEKEKALFCGDTLFNAGVGGVHAASADVNQLYDSVVKISSLDGDIKPYPAHDYWQSNLDFALSILPNDESFNYYRNQVAELAAEHKPVVNLAEESKLNIFIRSISDKSLLQALPEYRLGREMFVKLRKLKNNF.

His-54, His-56, Asp-58, His-59, His-111, Asp-130, and His-170 together coordinate Zn(2+).

The protein belongs to the metallo-beta-lactamase superfamily. Glyoxalase II family. Monomer. The cofactor is Zn(2+).

It carries out the reaction an S-(2-hydroxyacyl)glutathione + H2O = a 2-hydroxy carboxylate + glutathione + H(+). It functions in the pathway secondary metabolite metabolism; methylglyoxal degradation; (R)-lactate from methylglyoxal: step 2/2. Functionally, thiolesterase that catalyzes the hydrolysis of S-D-lactoyl-glutathione to form glutathione and D-lactic acid. In Francisella philomiragia subsp. philomiragia (strain ATCC 25017 / CCUG 19701 / FSC 153 / O#319-036), this protein is Hydroxyacylglutathione hydrolase.